The chain runs to 512 residues: Reduced folate transporter (512 aa).

At methionine 1 the chain carries N-acetylmethionine. Topologically, residues 1–29 (MVPTGQVAEKQAYEEPRQDHELKSWRCLV) are cytoplasmic. The chain crosses the membrane as a helical span at residues 30–50 (FYLCFFGFMAQLRPGESFITP). Folate-binding residues include isoleucine 48 and threonine 49. Residues 51 to 62 (FLLERKFTKEQV) lie on the Extracellular side of the membrane. A helical transmembrane segment spans residues 63-85 (TNEIIPMLPYSHLAVLVPVFLLT). Residues 86–89 (DYLR) lie on the Cytoplasmic side of the membrane. Residues 90–110 (YKPVLVLQCLSFVCVWLLLLL) traverse the membrane as a helical segment. Residues 111–114 (GTSV) are Extracellular-facing. The chain crosses the membrane as a helical span at residues 115–137 (VHMQLMEVFYSVTMAARIAYSSY). Residues glutamate 121 and arginine 131 each contribute to the folate site. Topologically, residues 138–151 (IFSLVHPSRYQRMA) are cytoplasmic. A helical transmembrane segment spans residues 152 to 176 (SYSRAAVLLGVFISSVLGQALVTVG). Folate is bound at residue valine 162. At 177–181 (HISTY) the chain is on the extracellular side. Residues 182–200 (TLNCVSLGFILFSLVLSLF) traverse the membrane as a helical segment. Topologically, residues 201–266 (LKRPKRSLFF…ELVENARQPQ (66 aa)) are cytoplasmic. A helical membrane pass occupies residues 267 to 292 (LRLWCLWWVFNSSGYYLITYYVHVLW). Residues tyrosine 281, tyrosine 282, and tyrosine 286 each coordinate folate. The Extracellular portion of the chain corresponds to 293–300 (RSTDSSLS). A helical membrane pass occupies residues 301–323 (YNGAVDAASTLLSAITSFSAGFL). Residues 324 to 329 (SIRWTL) are Cytoplasmic-facing. A helical transmembrane segment spans residues 330-350 (WSKLVIAGVIAIQASLVFCMF). The Extracellular portion of the chain corresponds to 351–353 (QIR). A helical transmembrane segment spans residues 354-377 (DIWVCYVTFVLFRGAYQFLVPIAT). The folate site is built by arginine 366 and glutamine 370. Residues 378-391 (FQIASSLSKELCAL) lie on the Cytoplasmic side of the membrane. The helical transmembrane segment at 392-415 (VFGINTFLATALKTCITLVVSDKR) threads the bilayer. A required for substrate-binding region spans residues 400-412 (ATALKTCITLVVS). Residues 416–423 (GLGLQVRD) lie on the Extracellular side of the membrane. Residues 424 to 448 (QFRIYFIYFLMLSITCFAWAGLDGL) form a helical membrane-spanning segment. The Cytoplasmic portion of the chain corresponds to 449 to 512 (RYCQRGRHQP…RGDLRVEAKA (64 aa)). Phosphoserine is present on residues serine 467, serine 472, and serine 477. A disordered region spans residues 478–512 (LQDGDLRGPQPSAPQLLSEDGMEDDRGDLRVEAKA).

Belongs to the reduced folate carrier (RFC) transporter (TC 2.A.48) family.

It is found in the cell membrane. The protein localises to the apical cell membrane. Its subcellular location is the basolateral cell membrane. The enzyme catalyses 5-amino-1-(5-phospho-beta-D-ribosyl)imidazole-4-carboxamide(in) + (6S)-5-methyl-5,6,7,8-tetrahydrofolate(out) = 5-amino-1-(5-phospho-beta-D-ribosyl)imidazole-4-carboxamide(out) + (6S)-5-methyl-5,6,7,8-tetrahydrofolate(in). Antiporter that mediates the import of reduced folates, driven by the export of organic anions. Also acts as an importer of immunoreactive cyclic dinucleotides, but with a lower transporter activity. Mechanistically, acts as a secondary active transporter, which exports intracellular organic anions down their concentration gradients to facilitate the uptake of its substrates. Has high affinity for N5-methyltetrahydrofolate, the predominant circulating form of folate. Also mediates the import of antifolate drug methotrexate. 5-amino-4-imidazolecarboxamide riboside (AICAR), when phosphorylated to AICAR monophosphate, can serve as an organic anion for antiporter activity. The polypeptide is Reduced folate transporter (Mus musculus (Mouse)).